The sequence spans 130 residues: UPF0102 protein AHA_3896 (130 aa).

It belongs to the UPF0102 family.

This chain is UPF0102 protein AHA_3896, found in Aeromonas hydrophila subsp. hydrophila (strain ATCC 7966 / DSM 30187 / BCRC 13018 / CCUG 14551 / JCM 1027 / KCTC 2358 / NCIMB 9240 / NCTC 8049).